A 226-amino-acid chain; its full sequence is Protein-L-isoaspartate(D-aspartate) O-methyltransferase (226 aa).

S-adenosyl-L-homocysteine is bound by residues 57–60 (VTIS), histidine 65, serine 89, 115–116 (EH), 147–148 (DG), and threonine 222. Residue serine 60 is part of the active site.

Belongs to the methyltransferase superfamily. L-isoaspartyl/D-aspartyl protein methyltransferase family. As to quaternary structure, monomer.

Its subcellular location is the cytoplasm. The protein localises to the cytosol. The catalysed reaction is [protein]-L-isoaspartate + S-adenosyl-L-methionine = [protein]-L-isoaspartate alpha-methyl ester + S-adenosyl-L-homocysteine. Initiates the repair of damaged proteins by catalyzing methyl esterification of L-isoaspartyl and D-aspartyl residues produced by spontaneous isomerization and racemization of L-aspartyl and L-asparaginyl residues in aging peptides and proteins. The protein is Protein-L-isoaspartate(D-aspartate) O-methyltransferase (Pcmt) of Drosophila melanogaster (Fruit fly).